Here is a 247-residue protein sequence, read N- to C-terminus: MDAFIRFTNQTQGRDRLFRATQYTCMLLRYLLEPKADNEKVVMKLKKLESSVSTGRKWFRLGNVVHALQATQQSVRATDLVPRICLTLASLNRVIYFICDTVLFVRSTGLASGVNKEKWRRWAARYYYYSLLLSLVRDLYEVSLQMKQVAHDRAKREKSPSQDTLGYSVADEETEWLQSLLLLLFHSLKRHPPLFLDTVKNFCDILNPLDQLGIYKSNPGIIGLGGLVSSVAGIITVAYPQMKLKTQ.

The Cytoplasmic segment spans residues 1-83; it reads MDAFIRFTNQ…SVRATDLVPR (83 aa). Residues 84–105 form a helical membrane-spanning segment; that stretch reads ICLTLASLNRVIYFICDTVLFV. Topologically, residues 106–219 are lumenal; that stretch reads RSTGLASGVN…DQLGIYKSNP (114 aa). Residues 220-239 traverse the membrane as a helical segment; it reads GIIGLGGLVSSVAGIITVAY. The tract at residues 220–239 is required for homodimerization, interaction with PEX11G, and peroxisomal localization; that stretch reads GIIGLGGLVSSVAGIITVAY. The Cytoplasmic segment spans residues 240–247; it reads PQMKLKTQ.

The protein belongs to the peroxin-11 family. In terms of assembly, homodimer. Heterodimer with PEX11G. Probably interacts with COPB2 and COPA. Interacts with PEX19. Interacts with FIS1.

It localises to the peroxisome membrane. In terms of biological role, may be involved in peroxisomal proliferation and may regulate peroxisomes division. May mediate binding of coatomer proteins to the peroxisomal membrane. Promotes membrane protrusion and elongation on the peroxisomal surface. In Bos taurus (Bovine), this protein is Peroxisomal membrane protein 11A (PEX11A).